We begin with the raw amino-acid sequence, 437 residues long: Asparagine--tRNA ligase (437 aa).

The protein belongs to the class-II aminoacyl-tRNA synthetase family. Homodimer.

It localises to the cytoplasm. The catalysed reaction is tRNA(Asn) + L-asparagine + ATP = L-asparaginyl-tRNA(Asn) + AMP + diphosphate + H(+). This Symbiobacterium thermophilum (strain DSM 24528 / JCM 14929 / IAM 14863 / T) protein is Asparagine--tRNA ligase.